Reading from the N-terminus, the 331-residue chain is Small ribosomal subunit protein uS2 (331 aa).

The protein belongs to the universal ribosomal protein uS2 family.

In Rhodopseudomonas palustris (strain BisB5), this protein is Small ribosomal subunit protein uS2.